The following is a 438-amino-acid chain: Trigger factor (438 aa).

Residues 160 to 245 (DDKVTIDFVG…VKKIQQAELP (86 aa)) form the PPIase FKBP-type domain.

It belongs to the FKBP-type PPIase family. Tig subfamily.

Its subcellular location is the cytoplasm. The catalysed reaction is [protein]-peptidylproline (omega=180) = [protein]-peptidylproline (omega=0). Its function is as follows. Involved in protein export. Acts as a chaperone by maintaining the newly synthesized protein in an open conformation. Functions as a peptidyl-prolyl cis-trans isomerase. The protein is Trigger factor of Francisella tularensis subsp. mediasiatica (strain FSC147).